Here is a 417-residue protein sequence, read N- to C-terminus: UPF0597 protein FMG_0209 (417 aa).

Belongs to the UPF0597 family.

In Finegoldia magna (strain ATCC 29328 / DSM 20472 / WAL 2508) (Peptostreptococcus magnus), this protein is UPF0597 protein FMG_0209.